The primary structure comprises 469 residues: Uridine kinase-like protein 4 (469 aa).

The segment at 46–249 (QRQPFVIGVA…IVQHICTKLG (204 aa)) is uridine kinase. The uracil phosphoribosyltransferase stretch occupies residues 259–469 (NLYVIHSTFQ…GDRYFGTDDD (211 aa)). GTP contacts are provided by residues lysine 283, arginine 292, and 326-329 (CKRL). Residues arginine 336 and arginine 361 each contribute to the 5-phospho-alpha-D-ribose 1-diphosphate site. Residue arginine 381 coordinates GTP. Residues aspartate 387, 392–395 (TGNS), and glutamate 458 each bind 5-phospho-alpha-D-ribose 1-diphosphate. 457–459 (GEF) contributes to the uracil binding site.

It in the N-terminal section; belongs to the uridine kinase family. In the C-terminal section; belongs to the UPRTase family. The cofactor is Mg(2+).

The catalysed reaction is UMP + diphosphate = 5-phospho-alpha-D-ribose 1-diphosphate + uracil. The enzyme catalyses cytidine + ATP = CMP + ADP + H(+). It carries out the reaction uridine + ATP = UMP + ADP + H(+). It participates in pyrimidine metabolism; UMP biosynthesis via salvage pathway; UMP from uracil: step 1/1. It functions in the pathway pyrimidine metabolism; CTP biosynthesis via salvage pathway; CTP from cytidine: step 1/3. Its pathway is pyrimidine metabolism; UMP biosynthesis via salvage pathway; UMP from uridine: step 1/1. Its activity is regulated as follows. Allosterically activated by GTP. Its function is as follows. Involved in the pyrimidine salvage pathway. The uracil phosphoribosyltransferase (UPRT) activity, that catalyzes the conversion of uracil and 5-phospho-alpha-D-ribose 1-diphosphate (PRPP) to UMP and diphosphate, is unsure. The protein is Uridine kinase-like protein 4 (UKL4) of Arabidopsis thaliana (Mouse-ear cress).